We begin with the raw amino-acid sequence, 134 residues long: MSWQAYVDDHLMCDIEGHEGHRLTAAAIVGHDGSVWAQSATFPQFKPEEMNGIMTDFNEPGHLAPTGLHLGGTKYMVIQGEAGAVIRGKKGSGGITTKKTGQALVFGIYEEPVTPGQCNMVVERLGDYLLEQGL.

A disulfide bond links Cys-13 and Cys-118. An Involved in PIP2 interaction motif is present at residues 84 to 100 (AVIRGKKGSGGITTKKT). At Thr-114 the chain carries Phosphothreonine.

Belongs to the profilin family. As to quaternary structure, occurs in many kinds of cells as a complex with monomeric actin in a 1:1 ratio. Post-translationally, phosphorylated by MAP kinases.

The protein resides in the cytoplasm. It localises to the cytoskeleton. Its function is as follows. Binds to actin and affects the structure of the cytoskeleton. At high concentrations, profilin prevents the polymerization of actin, whereas it enhances it at low concentrations. The polypeptide is Profilin-1 (Olea europaea (Common olive)).